The primary structure comprises 512 residues: Gamma-aminobutyric acid receptor subunit beta-2 (512 aa).

Residues Met-1 to Gln-25 form the signal peptide. Topologically, residues Ser-26 to Tyr-244 are extracellular. N-linked (GlcNAc...) asparagine glycans are attached at residues Asn-32 and Asn-104. Tyr-121 provides a ligand contact to histamine. Cys-160 and Cys-174 are joined by a disulfide. N-linked (GlcNAc...) asparagine glycosylation is present at Asn-173. Histamine is bound by residues Ser-180–Tyr-181 and Thr-226. Residues Tyr-181 and Thr-226 each contribute to the 4-aminobutanoate site. Transmembrane regions (helical) follow at residues Phe-245 to Ile-266, Ala-270 to Leu-292, and Ala-304 to Val-326. The Cytoplasmic segment spans residues Asn-327–Arg-489. Tyr-441 carries the phosphotyrosine modification. Residues Trp-490–Val-511 traverse the membrane as a helical segment.

It belongs to the ligand-gated ion channel (TC 1.A.9) family. Gamma-aminobutyric acid receptor (TC 1.A.9.5) subfamily. GABRB2 sub-subfamily. As to quaternary structure, heteropentamer, formed by a combination of alpha (GABRA1-6), beta (GABRB1-3), gamma (GABRG1-3), delta (GABRD), epsilon (GABRE), rho (GABRR1-3), pi (GABRP) and theta (GABRQ) chains, each subunit exhibiting distinct physiological and pharmacological properties. Interacts with UBQLN1. May interact with KIF21B. Identified in a complex of 720 kDa composed of LHFPL4, NLGN2, GABRA1, GABRB2, GABRG2 and GABRB3. Glycosylated.

It is found in the postsynaptic cell membrane. The protein resides in the cell membrane. The protein localises to the cytoplasmic vesicle. It carries out the reaction chloride(in) = chloride(out). Its activity is regulated as follows. Allosterically activated by benzodiazepines and the anesthetic etomidate. Inhibited by the antagonist bicuculline. Potentiated by histamine. In terms of biological role, beta subunit of the heteropentameric ligand-gated chloride channel gated by gamma-aminobutyric acid (GABA), a major inhibitory neurotransmitter in the brain. GABA-gated chloride channels, also named GABA(A) receptors (GABAAR), consist of five subunits arranged around a central pore and contain GABA active binding site(s) located at the alpha and beta subunit interface(s). When activated by GABA, GABAARs selectively allow the flow of chloride anions across the cell membrane down their electrochemical gradient. Chloride influx into the postsynaptic neuron following GABAAR opening decreases the neuron ability to generate a new action potential, thereby reducing nerve transmission. GABAARs containing alpha-1 and beta-2 or -3 subunits exhibit synaptogenic activity; the gamma-2 subunit being necessary but not sufficient to induce rapid synaptic contacts formation. Extrasynaptic beta-2 receptors contribute to the tonic GABAergic inhibition. Beta-containing GABAARs can simultaneously bind GABA and histamine where histamine binds at the interface of two neighboring beta subunits, which may be involved in the regulation of sleep and wakefulness. The sequence is that of Gamma-aminobutyric acid receptor subunit beta-2 from Mus musculus (Mouse).